Here is a 221-residue protein sequence, read N- to C-terminus: Intraflagellar transport-associated protein (221 aa).

S59 is subject to Phosphoserine.

As to quaternary structure, interacts with IFT122; the interaction associates IFTAP with IFT-A complex.

Its function is as follows. Seems to play a role in ciliary BBSome localization, maybe through interaction with IFT-A complex. The sequence is that of Intraflagellar transport-associated protein from Homo sapiens (Human).